We begin with the raw amino-acid sequence, 295 residues long: Alpha-soluble NSF attachment protein (295 aa).

Methionine 1 is subject to N-acetylmethionine. Residues serine 26, serine 29, and serine 195 each carry the phosphoserine modification.

It belongs to the SNAP family. As to quaternary structure, interacts with PRKCABP, and disrupts the interaction between GRIA2 and PRKCABP, leading to the internalization of GRIA2. Found in a complex with VAMP8. Component of a SNARE-like complex that contains at least ZW10, USE1L, RINT1, STX18 and NAPA/SNAP-alpha. Interacts with VTI1A. Interacts with STX12. Interacts with GNA12 (via N-terminus); the interaction promotes CDH5 localization to plasma membrane.

Its subcellular location is the cell membrane. Required for vesicular transport between the endoplasmic reticulum and the Golgi apparatus. Together with GNA12 promotes CDH5 localization to plasma membrane. The sequence is that of Alpha-soluble NSF attachment protein (Napa) from Mus musculus (Mouse).